The sequence spans 353 residues: Photosystem II protein D1 (353 aa).

T2 carries the N-acetylthreonine modification. T2 carries the post-translational modification Phosphothreonine. 3 consecutive transmembrane segments (helical) span residues 29-46 (YIGW…TATS), 118-133 (HFLL…EWEL), and 142-156 (WIAV…AAAA). H118 is a binding site for chlorophyll a. Residue Y126 coordinates pheophytin a. Residues D170 and E189 each coordinate [CaMn4O5] cluster. Residues 197–218 (FHMLGVAGVFGGSLFSAMHGSL) form a helical membrane-spanning segment. H198 contacts chlorophyll a. Residues H215 and 264–265 (SF) contribute to the a quinone site. H215 contributes to the Fe cation binding site. H272 is a Fe cation binding site. The helical transmembrane segment at 274–288 (FLAAWPVVGIWFTAL) threads the bilayer. [CaMn4O5] cluster-binding residues include H332, E333, D342, and A344. Residues 345 to 353 (SVEAPSVKA) constitute a propeptide that is removed on maturation.

Belongs to the reaction center PufL/M/PsbA/D family. PSII is composed of 1 copy each of membrane proteins PsbA, PsbB, PsbC, PsbD, PsbE, PsbF, PsbH, PsbI, PsbJ, PsbK, PsbL, PsbM, PsbT, PsbX, PsbY, PsbZ, Psb30/Ycf12, at least 3 peripheral proteins of the oxygen-evolving complex and a large number of cofactors. It forms dimeric complexes. The D1/D2 heterodimer binds P680, chlorophylls that are the primary electron donor of PSII, and subsequent electron acceptors. It shares a non-heme iron and each subunit binds pheophytin, quinone, additional chlorophylls, carotenoids and lipids. D1 provides most of the ligands for the Mn4-Ca-O5 cluster of the oxygen-evolving complex (OEC). There is also a Cl(-1) ion associated with D1 and D2, which is required for oxygen evolution. The PSII complex binds additional chlorophylls, carotenoids and specific lipids. serves as cofactor. Post-translationally, tyr-161 forms a radical intermediate that is referred to as redox-active TyrZ, YZ or Y-Z. C-terminally processed by CTPA; processing is essential to allow assembly of the oxygen-evolving complex and thus photosynthetic growth.

It is found in the plastid. It localises to the chloroplast thylakoid membrane. The catalysed reaction is 2 a plastoquinone + 4 hnu + 2 H2O = 2 a plastoquinol + O2. Its function is as follows. Photosystem II (PSII) is a light-driven water:plastoquinone oxidoreductase that uses light energy to abstract electrons from H(2)O, generating O(2) and a proton gradient subsequently used for ATP formation. It consists of a core antenna complex that captures photons, and an electron transfer chain that converts photonic excitation into a charge separation. The D1/D2 (PsbA/PsbD) reaction center heterodimer binds P680, the primary electron donor of PSII as well as several subsequent electron acceptors. The protein is Photosystem II protein D1 of Angiopteris evecta (Mule's foot fern).